The chain runs to 503 residues: Cytochrome P450 7A1 (503 aa).

Residues 4–24 (ISLIWGIAVVVSCCIWFIIGI) traverse the membrane as a helical segment. Cys-444 lines the heme pocket.

Belongs to the cytochrome P450 family. Heme is required as a cofactor.

Its subcellular location is the endoplasmic reticulum membrane. The protein resides in the microsome membrane. The enzyme catalyses cholesterol + reduced [NADPH--hemoprotein reductase] + O2 = 7alpha-hydroxycholesterol + oxidized [NADPH--hemoprotein reductase] + H2O + H(+). The catalysed reaction is 4beta-hydroxycholesterol + reduced [NADPH--hemoprotein reductase] + O2 = 4beta,7alpha-dihydroxycholesterol + oxidized [NADPH--hemoprotein reductase] + H2O + H(+). It carries out the reaction lathosterol + reduced [NADPH--hemoprotein reductase] + O2 = 7alpha,8alpha-epoxy-5alpha-cholestan-3beta-ol + oxidized [NADPH--hemoprotein reductase] + H2O + H(+). It catalyses the reaction lathosterol + reduced [NADPH--hemoprotein reductase] + O2 = 5alpha-cholestan-7-oxo-3beta-ol + oxidized [NADPH--hemoprotein reductase] + H2O + H(+). The enzyme catalyses 7-dehydrocholesterol + reduced [NADPH--hemoprotein reductase] + O2 = 7-oxocholesterol + oxidized [NADPH--hemoprotein reductase] + H2O + H(+). The catalysed reaction is (24S)-hydroxycholesterol + reduced [NADPH--hemoprotein reductase] + O2 = (24S)-7alpha-dihydroxycholesterol + oxidized [NADPH--hemoprotein reductase] + H2O + H(+). It carries out the reaction (24R)-hydroxycholesterol + reduced [NADPH--hemoprotein reductase] + O2 = (24R)-7alpha-dihydroxycholesterol + oxidized [NADPH--hemoprotein reductase] + H2O + H(+). Its pathway is lipid metabolism; bile acid biosynthesis. It functions in the pathway steroid metabolism; cholesterol degradation. Its function is as follows. A cytochrome P450 monooxygenase involved in the metabolism of endogenous cholesterol and its oxygenated derivatives (oxysterols). Mechanistically, uses molecular oxygen inserting one oxygen atom into a substrate, and reducing the second into a water molecule, with two electrons provided by NADPH via cytochrome P450 reductase (CPR; NADPH-ferrihemoprotein reductase). Functions as a critical regulatory enzyme of bile acid biosynthesis and cholesterol homeostasis. Catalyzes the hydroxylation of carbon hydrogen bond at 7-alpha position of cholesterol, a rate-limiting step in cholesterol catabolism and bile acid biosynthesis. 7-alpha hydroxylates several oxysterols, including 4beta-hydroxycholesterol and 24-hydroxycholesterol. Catalyzes the oxidation of the 7,8 double bond of 7-dehydrocholesterol and lathosterol with direct and predominant formation of the 7-keto derivatives. The polypeptide is Cytochrome P450 7A1 (Mus musculus (Mouse)).